Consider the following 176-residue polypeptide: Large ribosomal subunit protein uL6 (176 aa).

This sequence belongs to the universal ribosomal protein uL6 family. As to quaternary structure, part of the 50S ribosomal subunit.

Its function is as follows. This protein binds to the 23S rRNA, and is important in its secondary structure. It is located near the subunit interface in the base of the L7/L12 stalk, and near the tRNA binding site of the peptidyltransferase center. In Paraburkholderia phymatum (strain DSM 17167 / CIP 108236 / LMG 21445 / STM815) (Burkholderia phymatum), this protein is Large ribosomal subunit protein uL6.